The primary structure comprises 360 residues: UDP-N-acetylglucosamine--N-acetylmuramyl-(pentapeptide) pyrophosphoryl-undecaprenol N-acetylglucosamine transferase (360 aa).

UDP-N-acetyl-alpha-D-glucosamine-binding positions include 12–14 (TAG), Ser198, and Gln289.

The protein belongs to the glycosyltransferase 28 family. MurG subfamily.

Its subcellular location is the cell membrane. The catalysed reaction is Mur2Ac(oyl-L-Ala-gamma-D-Glu-L-Lys-D-Ala-D-Ala)-di-trans,octa-cis-undecaprenyl diphosphate + UDP-N-acetyl-alpha-D-glucosamine = beta-D-GlcNAc-(1-&gt;4)-Mur2Ac(oyl-L-Ala-gamma-D-Glu-L-Lys-D-Ala-D-Ala)-di-trans,octa-cis-undecaprenyl diphosphate + UDP + H(+). It participates in cell wall biogenesis; peptidoglycan biosynthesis. Cell wall formation. Catalyzes the transfer of a GlcNAc subunit on undecaprenyl-pyrophosphoryl-MurNAc-pentapeptide (lipid intermediate I) to form undecaprenyl-pyrophosphoryl-MurNAc-(pentapeptide)GlcNAc (lipid intermediate II). The sequence is that of UDP-N-acetylglucosamine--N-acetylmuramyl-(pentapeptide) pyrophosphoryl-undecaprenol N-acetylglucosamine transferase from Streptococcus equi subsp. zooepidemicus (strain MGCS10565).